The chain runs to 134 residues: Viral interleukin-8 homolog (134 aa).

An N-terminal signal peptide occupies residues Met-1–Gly-22.

It belongs to the intercrine alpha (chemokine CxC) family. Homodimer.

It is found in the secreted. In terms of biological role, plays a role in the early phase of cytolytic infections presumably by recruiting host B or T-lymphocytes. This Gallus gallus (Chicken) protein is Viral interleukin-8 homolog (MDV078).